We begin with the raw amino-acid sequence, 87 residues long: Small ribosomal subunit protein bS20 (87 aa).

The tract at residues 1–22 is disordered; sequence MANSAQARKRARQSLKARAHNA. Positions 7 to 19 are enriched in basic residues; the sequence is ARKRARQSLKARA.

This sequence belongs to the bacterial ribosomal protein bS20 family.

Binds directly to 16S ribosomal RNA. The protein is Small ribosomal subunit protein bS20 of Laribacter hongkongensis (strain HLHK9).